We begin with the raw amino-acid sequence, 553 residues long: Dihydroxy-acid dehydratase (553 aa).

Cys-49 serves as a coordination point for [2Fe-2S] cluster. Position 81 (Asp-81) interacts with Mg(2+). Cys-122 provides a ligand contact to [2Fe-2S] cluster. Asp-123 and Lys-124 together coordinate Mg(2+). Lys-124 carries the post-translational modification N6-carboxylysine. Residue Cys-194 coordinates [2Fe-2S] cluster. A Mg(2+)-binding site is contributed by Glu-444. Ser-470 (proton acceptor) is an active-site residue.

This sequence belongs to the IlvD/Edd family. As to quaternary structure, homodimer. Requires [2Fe-2S] cluster as cofactor. Mg(2+) is required as a cofactor.

The enzyme catalyses (2R)-2,3-dihydroxy-3-methylbutanoate = 3-methyl-2-oxobutanoate + H2O. It carries out the reaction (2R,3R)-2,3-dihydroxy-3-methylpentanoate = (S)-3-methyl-2-oxopentanoate + H2O. It functions in the pathway amino-acid biosynthesis; L-isoleucine biosynthesis; L-isoleucine from 2-oxobutanoate: step 3/4. The protein operates within amino-acid biosynthesis; L-valine biosynthesis; L-valine from pyruvate: step 3/4. Functionally, functions in the biosynthesis of branched-chain amino acids. Catalyzes the dehydration of (2R,3R)-2,3-dihydroxy-3-methylpentanoate (2,3-dihydroxy-3-methylvalerate) into 2-oxo-3-methylpentanoate (2-oxo-3-methylvalerate) and of (2R)-2,3-dihydroxy-3-methylbutanoate (2,3-dihydroxyisovalerate) into 2-oxo-3-methylbutanoate (2-oxoisovalerate), the penultimate precursor to L-isoleucine and L-valine, respectively. This chain is Dihydroxy-acid dehydratase, found in Aeropyrum pernix (strain ATCC 700893 / DSM 11879 / JCM 9820 / NBRC 100138 / K1).